Reading from the N-terminus, the 161-residue chain is Cyclic pyranopterin monophosphate synthase (161 aa).

Substrate is bound by residues Leu-75–His-77 and Met-113–Glu-114. The active site involves Asp-128.

This sequence belongs to the MoaC family. In terms of assembly, homohexamer; trimer of dimers.

The catalysed reaction is (8S)-3',8-cyclo-7,8-dihydroguanosine 5'-triphosphate = cyclic pyranopterin phosphate + diphosphate. The protein operates within cofactor biosynthesis; molybdopterin biosynthesis. Its function is as follows. Catalyzes the conversion of (8S)-3',8-cyclo-7,8-dihydroguanosine 5'-triphosphate to cyclic pyranopterin monophosphate (cPMP). In Cronobacter sakazakii (strain ATCC BAA-894) (Enterobacter sakazakii), this protein is Cyclic pyranopterin monophosphate synthase.